Reading from the N-terminus, the 485-residue chain is Adenylate kinase 8 (485 aa).

2 adenylate kinase regions span residues Pro-58 to Leu-258 and Pro-269 to Val-471. Position 67-72 (Ala-67–Thr-72) interacts with ATP. The interval Thr-87–Val-113 is NMP 1. Residues Gly-140–Lys-143 and Gln-147 each bind AMP. The tract at residues Gly-177–Glu-206 is LID 1. Arg-218 contacts AMP. Gly-278 to Leu-283 contributes to the ATP binding site. An NMP 2 region spans residues Cys-298–Val-327. Residues Gln-325–Val-327, Gly-354–Gln-357, and Gln-361 each bind AMP. The segment at Leu-391 to Tyr-424 is LID 2. Position 432 (Arg-432) interacts with AMP.

It belongs to the adenylate kinase family.

It is found in the cytoplasm. The protein resides in the cytosol. The enzyme catalyses AMP + ATP = 2 ADP. It catalyses the reaction a 2'-deoxyribonucleoside 5'-diphosphate + ATP = a 2'-deoxyribonucleoside 5'-triphosphate + ADP. It carries out the reaction a ribonucleoside 5'-diphosphate + ATP = a ribonucleoside 5'-triphosphate + ADP. Nucleoside monophosphate (NMP) kinase that catalyzes the reversible transfer of the terminal phosphate group between nucleoside triphosphates and monophosphates. Has highest activity toward AMP, and weaker activity toward dAMP, CMP and dCMP. Also displays broad nucleoside diphosphate kinase activity. This is Adenylate kinase 8 (ak8) from Xenopus laevis (African clawed frog).